A 512-amino-acid chain; its full sequence is Mucin-13 (512 aa).

Positions 1 to 18 are cleaved as a signal peptide; sequence MKAIIHLTLLALLSVNTA. The Extracellular portion of the chain corresponds to 19–421; it reads TNQGNSADAV…GLDCKDKFQL (403 aa). A compositionally biased stretch (polar residues) spans 22–38; sequence GNSADAVTTTETATSGP. Disordered stretches follow at residues 22-67 and 133-176; these read GNSA…PTAT and MVPS…PSNP. Positions 53–67 are enriched in low complexity; the sequence is TASTTANTPSFPTAT. Positions 135 to 176 are enriched in polar residues; that stretch reads PSETQSNNEMSPTTEDNQSSGPPTGTALLETSTLNSTGPSNP. N-linked (GlcNAc...) asparagine glycans are attached at residues asparagine 151 and asparagine 169. Residues 173–211 enclose the EGF-like 1 domain; that stretch reads PSNPCQDDPCADNSLCVKLHNTSFCLCLEGYYYNSSTCK. Disulfide bonds link cysteine 177–cysteine 188, cysteine 182–cysteine 197, and cysteine 199–cysteine 210. Asparagine 193, asparagine 206, asparagine 284, and asparagine 332 each carry an N-linked (GlcNAc...) asparagine glycan. The SEA domain maps to 212–336; sequence KGKVFPGKIS…DYYGCNQTAD (125 aa). 2 EGF-like domains span residues 322 to 361 and 363 to 404; these read LTLRCDYYGCNQTADDCLNGLACDCKSDLQRPNPQSPFCV and SSLK…GNCQ. 6 disulfide bridges follow: cysteine 326-cysteine 338, cysteine 331-cysteine 344, cysteine 346-cysteine 360, cysteine 367-cysteine 378, cysteine 371-cysteine 389, and cysteine 391-cysteine 403. A helical transmembrane segment spans residues 422-442; it reads ILTIVGTIAGIVILSMIIALI. Over 443–512 the chain is Cytoplasmic; sequence VTARSNNKTK…RHSSMPRPDY (70 aa). Residues 493 to 505 are compositionally biased toward polar residues; sequence RDSQMQNPYSRHS. Residues 493-512 form a disordered region; that stretch reads RDSQMQNPYSRHSSMPRPDY.

Homodimer of beta subunits. Cleaved into two subunits, alpha and beta, probably between the first EGF domain and the SEA domain. Beta subunit contains the cytoplasmic tail and alpha subunit the extracellular tail. The homooligomerization into dimers is dependent on intrachain disulfide bonds. In terms of processing, highly N-glycosylated. In terms of tissue distribution, highly expressed in epithelial tissues, particularly those of the gastrointestinal and respiratory tracts, such as large intestine and trachea, followed by kidney, small intestine, appendix and stomach.

It is found in the cell membrane. Its subcellular location is the apical cell membrane. It localises to the secreted. Functionally, epithelial and hemopoietic transmembrane mucin that may play a role in cell signaling. The chain is Mucin-13 (MUC13) from Homo sapiens (Human).